Reading from the N-terminus, the 191-residue chain is Ribonuclease HII (191 aa).

The RNase H type-2 domain maps to 4–191 (YTAAGLDEVG…HRKTFLSKIQ (188 aa)). A divalent metal cation contacts are provided by D10, E11, and D106.

Belongs to the RNase HII family. The cofactor is Mn(2+). Mg(2+) serves as cofactor.

Its subcellular location is the cytoplasm. It carries out the reaction Endonucleolytic cleavage to 5'-phosphomonoester.. Functionally, endonuclease that specifically degrades the RNA of RNA-DNA hybrids. This chain is Ribonuclease HII, found in Prochlorococcus marinus (strain SARG / CCMP1375 / SS120).